A 745-amino-acid chain; its full sequence is Junction plakoglobin (745 aa).

Met1 bears the N-acetylmethionine mark. O-linked (GlcNAc) threonine glycosylation occurs at Thr14. Residues Ser99 and Ser125 each carry the phosphoserine modification. ARM repeat units lie at residues 132–171 (NYQD…QLSK), 172–215 (KEAS…LSHH), 216–255 (REGL…NLLL), 258–297 (EGAK…LLAY), 298–341 (GNQE…LSVC), 342–381 (PSNK…NLSD), 383–420 (ATKQ…NLTC), 423–464 (SKNK…HLTS), 470–510 (EMAQ…NLAL), 512–551 (PANH…QPYT), 574–613 (PMNR…ELAQ), and 615–661 (KEAA…PDYR). Residues 132-297 (NYQDDAELAT…TTDCLQLLAY (166 aa)) are interaction with DSC1 and DSG1. Ser182 carries the phosphoserine modification. The interval 574–661 (PMNRMEIFRL…ISEDKNPDYR (88 aa)) is interaction with DSC1. Ser665 and Ser730 each carry phosphoserine.

This sequence belongs to the beta-catenin family. As to quaternary structure, homodimer. Component of an E-cadherin/catenin adhesion complex composed of at least E-cadherin/CDH1 and gamma-catenin/JUP, and possibly alpha-catenin/CTNNA1; the complex is located to adherens junctions. The stable association of CTNNA1 is controversial as CTNNA1 was shown not to bind to F-actin when assembled in the complex. Interacts with MUC1. Interacts with CAV1. Interacts with PTPRJ. Interacts with DSG1. Interacts with DSC1 and DSC2. Interacts with PKP2. Interacts with PKP3 (via N-terminus); the interaction is required for PKP3 localization to desmosome cell-cell junctions. Interacts with DSG4. In terms of processing, may be phosphorylated by FER.

It localises to the cell junction. It is found in the adherens junction. The protein resides in the desmosome. The protein localises to the cytoplasm. Its subcellular location is the cytoskeleton. It localises to the cell membrane. It is found in the nucleus. Common junctional plaque protein. The membrane-associated plaques are architectural elements in an important strategic position to influence the arrangement and function of both the cytoskeleton and the cells within the tissue. The presence of plakoglobin in both the desmosomes and in the intermediate junctions suggests that it plays a central role in the structure and function of submembranous plaques. Acts as a substrate for VE-PTP and is required by it to stimulate VE-cadherin function in endothelial cells. Can replace beta-catenin in E-cadherin/catenin adhesion complexes which are proposed to couple cadherins to the actin cytoskeleton. The sequence is that of Junction plakoglobin from Bos taurus (Bovine).